A 125-amino-acid chain; its full sequence is Large ribosomal subunit protein bL12 (125 aa).

It belongs to the bacterial ribosomal protein bL12 family. In terms of assembly, homodimer. Part of the ribosomal stalk of the 50S ribosomal subunit. Forms a multimeric L10(L12)X complex, where L10 forms an elongated spine to which 2 to 4 L12 dimers bind in a sequential fashion. Binds GTP-bound translation factors.

Functionally, forms part of the ribosomal stalk which helps the ribosome interact with GTP-bound translation factors. Is thus essential for accurate translation. The chain is Large ribosomal subunit protein bL12 from Nitrobacter winogradskyi (strain ATCC 25391 / DSM 10237 / CIP 104748 / NCIMB 11846 / Nb-255).